Consider the following 235-residue polypeptide: 7-cyano-7-deazaguanine synthase (235 aa).

10–20 (FSGGQDSTTCL) contributes to the ATP binding site. Positions 198, 213, 216, and 219 each coordinate Zn(2+).

It belongs to the QueC family. It depends on Zn(2+) as a cofactor.

The enzyme catalyses 7-carboxy-7-deazaguanine + NH4(+) + ATP = 7-cyano-7-deazaguanine + ADP + phosphate + H2O + H(+). It functions in the pathway purine metabolism; 7-cyano-7-deazaguanine biosynthesis. Functionally, catalyzes the ATP-dependent conversion of 7-carboxy-7-deazaguanine (CDG) to 7-cyano-7-deazaguanine (preQ(0)). This is 7-cyano-7-deazaguanine synthase from Paracidovorax citrulli (strain AAC00-1) (Acidovorax citrulli).